The chain runs to 140 residues: Large ribosomal subunit protein uL14 (140 aa).

Ser-17 carries the phosphoserine modification. A Phosphotyrosine modification is found at Tyr-38.

Belongs to the universal ribosomal protein uL14 family. Component of the large ribosomal subunit.

The protein resides in the cytoplasm. Functionally, component of the large ribosomal subunit. The ribosome is a large ribonucleoprotein complex responsible for the synthesis of proteins in the cell. This chain is Large ribosomal subunit protein uL14 (RPL23), found in Pongo abelii (Sumatran orangutan).